An 88-amino-acid chain; its full sequence is UPF0297 protein SAK_2030 (88 aa).

It belongs to the UPF0297 family.

This chain is UPF0297 protein SAK_2030, found in Streptococcus agalactiae serotype Ia (strain ATCC 27591 / A909 / CDC SS700).